The primary structure comprises 317 residues: Putative HTH-type transcriptional regulatory protein Mlab_0160 (317 aa).

The HTH cro/C1-type domain occupies 132–189 (LRTLREEQAMSLGDLAHALGVSRRTISKYEGGMGTTLEMAMRLEEFFNDDIVMPIDLL). The segment at residues 143–162 (LGDLAHALGVSRRTISKYEG) is a DNA-binding region (H-T-H motif). The disordered stretch occupies residues 199–219 (VPASLASGHNPESDAQPKRPE). The segment covering 209–219 (PESDAQPKRPE) has biased composition (basic and acidic residues).

The chain is Putative HTH-type transcriptional regulatory protein Mlab_0160 from Methanocorpusculum labreanum (strain ATCC 43576 / DSM 4855 / Z).